A 321-amino-acid polypeptide reads, in one-letter code: Sideroflexin-3 (321 aa).

Residue Met-1 is modified to N-acetylmethionine. Transmembrane regions (helical) follow at residues 146-164 (LGTA…ALGL), 174-194 (LVGR…NIPL), 225-245 (IFQV…IPPV), and 266-286 (LQVG…CALF).

The protein belongs to the sideroflexin family.

It localises to the mitochondrion membrane. The catalysed reaction is L-serine(in) = L-serine(out). Mitochondrial serine transporter that mediates transport of serine into mitochondria, an important step of the one-carbon metabolism pathway. Mitochondrial serine is converted to glycine and formate, which then exits to the cytosol where it is used to generate the charged folates that serve as one-carbon donors. In Rattus norvegicus (Rat), this protein is Sideroflexin-3 (Sfxn3).